The chain runs to 213 residues: Octanoyltransferase (213 aa).

Residues 32 to 207 (ESTLDEIWLV…NILALLNNPD (176 aa)) enclose the BPL/LPL catalytic domain. Residues 71–78 (RGGQVTYH), 138–140 (SLG), and 151–153 (GLA) contribute to the substrate site. C169 (acyl-thioester intermediate) is an active-site residue.

It belongs to the LipB family.

Its subcellular location is the cytoplasm. The catalysed reaction is octanoyl-[ACP] + L-lysyl-[protein] = N(6)-octanoyl-L-lysyl-[protein] + holo-[ACP] + H(+). It functions in the pathway protein modification; protein lipoylation via endogenous pathway; protein N(6)-(lipoyl)lysine from octanoyl-[acyl-carrier-protein]: step 1/2. Catalyzes the transfer of endogenously produced octanoic acid from octanoyl-acyl-carrier-protein onto the lipoyl domains of lipoate-dependent enzymes. Lipoyl-ACP can also act as a substrate although octanoyl-ACP is likely to be the physiological substrate. This Escherichia coli (strain SMS-3-5 / SECEC) protein is Octanoyltransferase.